We begin with the raw amino-acid sequence, 450 residues long: Zinc metalloproteinase nas-13 (450 aa).

A signal peptide spans 1–31 (MPSPTSSSASVFSSHLFFVFCIFSQIAQSYA). The N-linked (GlcNAc...) asparagine glycan is linked to Asn68. The 194-residue stretch at 110-303 (NAVRQTYLKW…YKINMLYNCP (194 aa)) folds into the Peptidase M12A domain. Disulfide bonds link Cys152-Cys302 and Cys174-Cys193. His201 provides a ligand contact to Zn(2+). Glu202 is an active-site residue. Positions 205 and 211 each coordinate Zn(2+). N-linked (GlcNAc...) asparagine glycosylation occurs at Asn225. A Cell attachment site motif is present at residues 349-351 (RGD). 6 cysteine pairs are disulfide-bonded: Cys368–Cys404, Cys375–Cys397, Cys384–Cys401, Cys414–Cys450, Cys421–Cys443, and Cys430–Cys447. ShKT domains are found at residues 368–404 (CEDR…CGKC) and 414–450 (CEDA…CNFC). An N-linked (GlcNAc...) asparagine glycan is attached at Asn431.

Zn(2+) serves as cofactor.

It localises to the secreted. Metalloprotease. The protein is Zinc metalloproteinase nas-13 (nas-13) of Caenorhabditis elegans.